The following is a 224-amino-acid chain: Synaptonemal complex protein 3 (224 aa).

Coiled-coil stretches lie at residues 63-97 (RVKC…WEER) and 137-171 (HDSM…QSST).

As to quaternary structure, interacts with gras-1. Interacts with brc-1 and brd-1.

The protein resides in the chromosome. In terms of biological role, plays a role in early meiotic events; during prophase I contributes to synaptonemal complex (SC) assembly, synapsis and chiasmata formation and stabilization of homologous chromosomes pairing. Required for restricting SC assembly to bridge paired chromosome axes. Required for the timely progression of meiotic crossover recombination. Required for the synapsis checkpoint. This chain is Synaptonemal complex protein 3, found in Caenorhabditis elegans.